The sequence spans 225 residues: Pathogenesis-related 5 protein Jun a 3.0101 (225 aa).

The signal sequence occupies residues Met1–Val26. Intrachain disulfides connect Cys35–Cys224, Cys76–Cys86, Cys91–Cys97, Cys139–Cys213, Cys144–Cys197, Cys152–Cys162, Cys166–Cys175, and Cys176–Cys184. IgE-binding stretches follow at residues Ala146–Lys157, Val158–Lys170, and Asn178–Lys191.

Belongs to the thaumatin family. Expressed in pollen (at protein level).

The polypeptide is Pathogenesis-related 5 protein Jun a 3.0101 (Juniperus ashei (Ozark white cedar)).